The primary structure comprises 453 residues: UDP-glycosyltransferase 76E1 (453 aa).

Residues Ser272, 331-333, 348-356, and 370-373 each bind UDP-alpha-D-glucose; these read APQ, HCGWNSTLE, and TGDQ.

Belongs to the UDP-glycosyltransferase family.

Its function is as follows. Possesses low quercetin 3-O-glucosyltransferase and 7-O-glucosyltransferase activities in vitro. The chain is UDP-glycosyltransferase 76E1 (UGT76E1) from Arabidopsis thaliana (Mouse-ear cress).